We begin with the raw amino-acid sequence, 426 residues long: UDP-N-acetylglucosamine 1-carboxyvinyltransferase (426 aa).

Position 22–23 (22–23) interacts with phosphoenolpyruvate; it reads KN. UDP-N-acetyl-alpha-D-glucosamine is bound at residue Arg-93. Asp-117 functions as the Proton donor in the catalytic mechanism. Asp-312 and Met-334 together coordinate UDP-N-acetyl-alpha-D-glucosamine.

Belongs to the EPSP synthase family. MurA subfamily.

It is found in the cytoplasm. It catalyses the reaction phosphoenolpyruvate + UDP-N-acetyl-alpha-D-glucosamine = UDP-N-acetyl-3-O-(1-carboxyvinyl)-alpha-D-glucosamine + phosphate. It participates in cell wall biogenesis; peptidoglycan biosynthesis. Cell wall formation. Adds enolpyruvyl to UDP-N-acetylglucosamine. The sequence is that of UDP-N-acetylglucosamine 1-carboxyvinyltransferase from Treponema denticola (strain ATCC 35405 / DSM 14222 / CIP 103919 / JCM 8153 / KCTC 15104).